Consider the following 38-residue polypeptide: Large ribosomal subunit protein bL36A (38 aa).

Belongs to the bacterial ribosomal protein bL36 family.

The sequence is that of Large ribosomal subunit protein bL36A from Cronobacter sakazakii (strain ATCC BAA-894) (Enterobacter sakazakii).